Reading from the N-terminus, the 24-residue chain is FLGGLMKIGAKLLPSVIGLFKKKQ.

It belongs to the non-disulfide-bridged peptide (NDBP) superfamily. Medium-length antimicrobial peptide (group 3) family. Ponericin-W subfamily. In terms of tissue distribution, expressed by the venom gland.

It is found in the secreted. The protein localises to the target cell membrane. Functionally, has a broad spectrum of activity against both Gram-positive and Gram-negative bacteria and S.cerevisiae. Has insecticidal and hemolytic activities. May act by disrupting the integrity of the bacterial cell membrane. This Neoponera apicalis (Ant) protein is U1-poneritoxin-Na1a.